The primary structure comprises 354 residues: Probable L-ascorbate-6-phosphate lactonase UlaG (354 aa).

The protein belongs to the UlaG family. A divalent metal cation serves as cofactor.

It localises to the cytoplasm. The enzyme catalyses L-ascorbate 6-phosphate + H2O = 3-dehydro-L-gulonate 6-phosphate. It functions in the pathway cofactor degradation; L-ascorbate degradation; D-xylulose 5-phosphate from L-ascorbate: step 1/4. Probably catalyzes the hydrolysis of L-ascorbate-6-P into 3-keto-L-gulonate-6-P. Is essential for L-ascorbate utilization under anaerobic conditions. The polypeptide is Probable L-ascorbate-6-phosphate lactonase UlaG (Shigella boydii serotype 18 (strain CDC 3083-94 / BS512)).